The sequence spans 338 residues: Ketol-acid reductoisomerase (NADP(+)) (338 aa).

In terms of domain architecture, KARI N-terminal Rossmann spans 1 to 181 (MKVYYENDAD…GGTKAGVIET (181 aa)). NADP(+) is bound by residues 24–27 (FGSQ), Lys-47, Ser-50, Ser-52, and 82–85 (DQVQ). The active site involves His-107. Gly-133 provides a ligand contact to NADP(+). One can recognise a KARI C-terminal knotted domain in the interval 182-327 (NFKDETETDL…EKLRGMMSWL (146 aa)). Residues Asp-190, Glu-194, Glu-226, and Glu-230 each contribute to the Mg(2+) site. Residue Ser-251 participates in substrate binding.

The protein belongs to the ketol-acid reductoisomerase family. It depends on Mg(2+) as a cofactor.

It catalyses the reaction (2R)-2,3-dihydroxy-3-methylbutanoate + NADP(+) = (2S)-2-acetolactate + NADPH + H(+). The catalysed reaction is (2R,3R)-2,3-dihydroxy-3-methylpentanoate + NADP(+) = (S)-2-ethyl-2-hydroxy-3-oxobutanoate + NADPH + H(+). It participates in amino-acid biosynthesis; L-isoleucine biosynthesis; L-isoleucine from 2-oxobutanoate: step 2/4. Its pathway is amino-acid biosynthesis; L-valine biosynthesis; L-valine from pyruvate: step 2/4. Functionally, involved in the biosynthesis of branched-chain amino acids (BCAA). Catalyzes an alkyl-migration followed by a ketol-acid reduction of (S)-2-acetolactate (S2AL) to yield (R)-2,3-dihydroxy-isovalerate. In the isomerase reaction, S2AL is rearranged via a Mg-dependent methyl migration to produce 3-hydroxy-3-methyl-2-ketobutyrate (HMKB). In the reductase reaction, this 2-ketoacid undergoes a metal-dependent reduction by NADPH to yield (R)-2,3-dihydroxy-isovalerate. This Chloroherpeton thalassium (strain ATCC 35110 / GB-78) protein is Ketol-acid reductoisomerase (NADP(+)).